Consider the following 234-residue polypeptide: Polycomb group RING finger protein 5-A (234 aa).

The RING-type zinc finger occupies 18 to 57 (CSICRGYLIKPTAVTECLHTFCKSCIVQHFEESNECPECG). A disordered region spans residues 97–130 (FWRKHKIKSNGEDGPRAKKSRLSGEDDDGNGGDY).

As to quaternary structure, component of a PRC1-like complex.

The protein localises to the nucleus. Its function is as follows. Component of Polycomb group (PcG) multiprotein complexes; the complex class is required to maintain the transcriptionally repressive state of some genes. This is Polycomb group RING finger protein 5-A from Danio rerio (Zebrafish).